Consider the following 59-residue polypeptide: UPF0434 protein VC_1876 (59 aa).

The protein belongs to the UPF0434 family.

The polypeptide is UPF0434 protein VC_1876 (Vibrio cholerae serotype O1 (strain ATCC 39315 / El Tor Inaba N16961)).